The chain runs to 347 residues: Endophilin-A3 (347 aa).

A membrane-binding amphipathic helix region spans residues Met-1 to Ile-21. Positions Ser-18–Ser-249 constitute a BAR domain. A required for dimerization upon membrane association region spans residues Pro-60–Pro-87. Positions Glu-181–Met-201 form a coiled coil. The tract at residues Phe-218–Glu-254 is interaction with ARC. The disordered stretch occupies residues Ser-248–Ser-271. Position 265 is a phosphoserine (Ser-265). The SH3 domain occupies Met-285–Pro-344.

Belongs to the endophilin family. In terms of assembly, interacts with ARC. Interacts with DNM1, SGIP1 and SYNJ1. Interacts with the huntingtin exon 1 protein (HDEX1P) containing a glutamine repeat in the pathological range and promotes formation of insoluble polyglutamine-containing aggregates in vivo. Interacts with DYDC1. Interacts with FASLG. Interacts with ATXN2. Interacts with BIN2. In terms of tissue distribution, brain and testis.

The protein resides in the cytoplasm. The protein localises to the early endosome membrane. In terms of biological role, implicated in endocytosis. May recruit other proteins to membranes with high curvature. In Homo sapiens (Human), this protein is Endophilin-A3 (SH3GL3).